We begin with the raw amino-acid sequence, 483 residues long: Bifunctional protein HldE (483 aa).

The interval 1–327 (MDDALAHLPR…ACASSAQGEP (327 aa)) is ribokinase. Residue 201–204 (NRKE) participates in ATP binding. The active site involves Asp-272. The segment at 354 to 483 (FTNGCFDLLH…TTNLIARMNS (130 aa)) is cytidylyltransferase.

In the N-terminal section; belongs to the carbohydrate kinase PfkB family. This sequence in the C-terminal section; belongs to the cytidylyltransferase family. Homodimer.

The enzyme catalyses D-glycero-beta-D-manno-heptose 7-phosphate + ATP = D-glycero-beta-D-manno-heptose 1,7-bisphosphate + ADP + H(+). It catalyses the reaction D-glycero-beta-D-manno-heptose 1-phosphate + ATP + H(+) = ADP-D-glycero-beta-D-manno-heptose + diphosphate. Its pathway is nucleotide-sugar biosynthesis; ADP-L-glycero-beta-D-manno-heptose biosynthesis; ADP-L-glycero-beta-D-manno-heptose from D-glycero-beta-D-manno-heptose 7-phosphate: step 1/4. It functions in the pathway nucleotide-sugar biosynthesis; ADP-L-glycero-beta-D-manno-heptose biosynthesis; ADP-L-glycero-beta-D-manno-heptose from D-glycero-beta-D-manno-heptose 7-phosphate: step 3/4. In terms of biological role, catalyzes the phosphorylation of D-glycero-D-manno-heptose 7-phosphate at the C-1 position to selectively form D-glycero-beta-D-manno-heptose-1,7-bisphosphate. Catalyzes the ADP transfer from ATP to D-glycero-beta-D-manno-heptose 1-phosphate, yielding ADP-D-glycero-beta-D-manno-heptose. This is Bifunctional protein HldE from Caulobacter vibrioides (strain ATCC 19089 / CIP 103742 / CB 15) (Caulobacter crescentus).